Consider the following 279-residue polypeptide: Small ribosomal subunit protein uS3 (279 aa).

The KH type-2 domain maps to 17–86; that stretch reads VDEYFLEKLE…NPQIDVQEVK (70 aa). Low complexity-rich tracts occupy residues 206–233 and 241–252; these read AEKK…STAA and ESEAAEAVTPEG. Positions 206-279 are disordered; the sequence is AEKKSPAAGA…VVKTDGDSQS (74 aa).

The protein belongs to the universal ribosomal protein uS3 family. In terms of assembly, part of the 30S ribosomal subunit.

In terms of biological role, binds the lower part of the 30S subunit head. The protein is Small ribosomal subunit protein uS3 of Methanocella arvoryzae (strain DSM 22066 / NBRC 105507 / MRE50).